Here is a 590-residue protein sequence, read N- to C-terminus: Protein I'm not dead yet (590 aa).

Helical transmembrane passes span 43 to 63 (GLVVFLVPLLCLPVMLLNEGA), 82 to 102 (ALPLYVTSMIPIVAFPIMGIM), 115 to 135 (TLVMFMGGIMVALAVEYCNLH), 153 to 173 (LHFGLIMVTMFLSMWISNAAC), 224 to 244 (LCYYLGIAYASSLGGCGTIIG), 270 to 290 (TFMFYSVPSMLVYTLLTFVFL), 329 to 349 (LGPMSIHEIQVMILFIFMVVM), 373 to 393 (SMPTIFVVVMCFMLPANYAFL), 457 to 477 (VLPNSVLLLVVILVAVFLTAF), 509 to 529 (AGLACSMAFHLPVSTPPNALV), and 540 to 560 (MAIAGIGPTIITIITLFVFCQ).

It belongs to the SLC13A/DASS transporter (TC 2.A.47) family. NADC subfamily. In adults, abundantly expressed in the fat body, basolateral region of midgut cells and oenocytes. Low level expression is seen in the halteres, procardia, restricted regions of the esophagus and hindgut, base of the legs and in a subset of cells in the third segment of the antennae.

It localises to the basolateral cell membrane. Its function is as follows. Cation-independent electroneutral transporter (not associated with membrane depolarization) of a variety of tricarboxylic and dicarboxylic acid-cycle intermediates. There is also small, but detectable, transport of monocarboxylics. Transport is through the epithelium of the gut and across the plasma membranes of organs involved in intermediary metabolism and storage. Affinity for substrates is citrate &gt; succinate &gt; pyruvate. Fumarate, a-ketoglutarate, and glutarate are also transported, but not lactate. Transport mechanism that is not coupled to Na(+), K(+), or Cl(-). Function is shown in Xenopus oocytes and human retinal pigment epithelial (HRPE) cell lines. The protein is Protein I'm not dead yet (Indy) of Drosophila melanogaster (Fruit fly).